Here is a 32-residue protein sequence, read N- to C-terminus: Ribulose bisphosphate carboxylase/oxygenase activase, chloroplastic (32 aa).

Residues Phe-13–Lys-32 form a disordered region.

Belongs to the RuBisCO activase family.

It is found in the plastid. It localises to the chloroplast stroma. Functionally, activation of RuBisCO (ribulose-1,5-bisphosphate carboxylase/oxygenase; EC 4.1.1.39) involves the ATP-dependent carboxylation of the epsilon-amino group of lysine leading to a carbamate structure. The polypeptide is Ribulose bisphosphate carboxylase/oxygenase activase, chloroplastic (Populus euphratica (Euphrates poplar)).